The primary structure comprises 46 residues: uncharacterized protein (46 aa).

Positions 1-46 (MNFGIKPDVSSGPRKGGPFKELSDFSKTSPTPQQPRSLSGKSVMLP) are disordered. Over residues 25–40 (FSKTSPTPQQPRSLSG) the composition is skewed to polar residues.

This is an uncharacterized protein from Dictyostelium discoideum (Social amoeba).